The following is a 143-amino-acid chain: Transcriptional regulator MraZ (143 aa).

SpoVT-AbrB domains follow at residues E5 to E47 and A76 to K119.

The protein belongs to the MraZ family. Forms oligomers.

Its subcellular location is the cytoplasm. It is found in the nucleoid. This Syntrophomonas wolfei subsp. wolfei (strain DSM 2245B / Goettingen) protein is Transcriptional regulator MraZ.